We begin with the raw amino-acid sequence, 453 residues long: Acyl-coenzyme A thioesterase 2, mitochondrial (453 aa).

The transit peptide at 1–42 (MVASSFAVLRASRLCQWGWKSWTQLSGPPPLSTGGRTTFART) directs the protein to the mitochondrion. Lys-83 bears the N6-acetyllysine mark. Catalysis depends on charge relay system residues Ser-273, Asp-365, and His-399. Lys-447 carries the N6-succinyllysine modification.

It belongs to the C/M/P thioester hydrolase family. Monomer. Post-translationally, the N-terminus is blocked. In terms of tissue distribution, constitutively expressed in heart and brown fat. Strongly induced in liver, and weakly in kidney, in peroxisome proliferator treated rat.

It localises to the mitochondrion matrix. It catalyses the reaction hexadecanoyl-CoA + H2O = hexadecanoate + CoA + H(+). It carries out the reaction tetradecanoyl-CoA + H2O = tetradecanoate + CoA + H(+). The enzyme catalyses octadecanoyl-CoA + H2O = octadecanoate + CoA + H(+). The catalysed reaction is eicosanoyl-CoA + H2O = eicosanoate + CoA + H(+). It catalyses the reaction decanoyl-CoA + H2O = decanoate + CoA + H(+). It carries out the reaction dodecanoyl-CoA + H2O = dodecanoate + CoA + H(+). The enzyme catalyses (9Z)-octadecenoyl-CoA + H2O = (9Z)-octadecenoate + CoA + H(+). The catalysed reaction is (9Z)-hexadecenoyl-CoA + H2O = (9Z)-hexadecenoate + CoA + H(+). It catalyses the reaction (9E)-octadecenoyl-CoA + H2O = (9E)-octadecenoate + CoA + H(+). It carries out the reaction (9Z,12Z)-octadecadienoyl-CoA + H2O = (9Z,12Z)-octadecadienoate + CoA + H(+). It functions in the pathway lipid metabolism; fatty acid metabolism. Its function is as follows. Catalyzes the hydrolysis of acyl-CoAs into free fatty acids and coenzyme A (CoASH), regulating their respective intracellular levels. Displays higher activity toward long chain acyl CoAs (C14-C20). The enzyme is involved in enhancing the hepatic fatty acid oxidation in mitochondria. This Rattus norvegicus (Rat) protein is Acyl-coenzyme A thioesterase 2, mitochondrial (Acot2).